The primary structure comprises 212 residues: Small ribosomal subunit protein uS5 (212 aa).

Residues 48–111 enclose the S5 DRBM domain; that stretch reads LEDEVLDINM…DIAKLNIIDV (64 aa).

The protein belongs to the universal ribosomal protein uS5 family. As to quaternary structure, part of the 30S ribosomal subunit. Contacts protein S4.

Its function is as follows. With S4 and S12 plays an important role in translational accuracy. The polypeptide is Small ribosomal subunit protein uS5 (Haloarcula marismortui (strain ATCC 43049 / DSM 3752 / JCM 8966 / VKM B-1809) (Halobacterium marismortui)).